The following is a 1693-amino-acid chain: Non-structural polyprotein pORF1 (1693 aa).

The Alphavirus-like MT domain maps to valine 56 to isoleucine 240. The tract at residues glutamate 60 to isoleucine 240 is methyltransferase. The Y-domain stretch occupies residues arginine 241–serine 439. A disulfide bond links cysteine 434 and cysteine 481. A protease region spans residues phenylalanine 442–proline 509. A zinc-binding region spans residues alanine 510–alanine 691. Positions 671, 673, and 686 each coordinate Zn(2+). The interval proline 712–threonine 771 is disordered. Residues proline 712–arginine 778 are hinge. Positions proline 725–threonine 735 are enriched in low complexity. A compositionally biased stretch (pro residues) spans proline 736–serine 748. The 147-residue stretch at alanine 775 to tryptophan 921 folds into the Macro domain. The X-domain stretch occupies residues proline 785–alanine 942. The (+)RNA virus helicase ATP-binding domain maps to isoleucine 934–tryptophan 1082. The NTPase/helicase stretch occupies residues glycine 960–phenylalanine 1204. Glycine 975–serine 982 serves as a coordination point for ATP. In terms of domain architecture, (+)RNA virus helicase C-terminal spans histidine 1083–serine 1216. The tract at residues glycine 1207–glutamate 1693 is RNA-directed RNA polymerase. The region spanning serine 1454–glycine 1565 is the RdRp catalytic domain.

The protein belongs to the hepevirus non-structural polyprotein family. As to quaternary structure, the protease domain interacts with host EIF2AK4 (via C-terminus); this interaction inhibits dimerization of EIF2AK4 and prevents EIF2AK4-mediated phosphorylation of host EIF2A. It depends on Mg(2+) as a cofactor. Post-translationally, ORF1 polyprotein does not seem to be processed into distinct enzymatic domains by a viral protease belonging to ORF1, but could be processed by a host serine protease like thrombin.

It localises to the host cytoplasm. It is found in the host perinuclear region. The enzyme catalyses RNA(n) + a ribonucleoside 5'-triphosphate = RNA(n+1) + diphosphate. The catalysed reaction is GTP + S-adenosyl-L-methionine = N(7)-methyl-GTP + S-adenosyl-L-homocysteine. Its activity is regulated as follows. Putative protease: Inhibited by chymostatin. Functionally, methyltransferase: Displays a capping enzyme activity. This function is necessary since all viral RNAs are synthesized in the cytoplasm, and host capping enzymes are restricted to the nucleus. The enzymatic reaction involves a covalent link between 7-methyl-GMP and the methyltransferase, whereas eukaryotic capping enzymes form a covalent complex only with GMP. Methyltransferase catalyzes transfer of a methyl group from S-adenosylmethionine to GTP and GDP to yield m(7)GTP or m(7)GDP. GDP is a better substrate than GTP. This enzyme also displays guanylyltransferase activity to form a covalent complex, methyltransferase-m(7)GMP, from which 7-methyl-GMP is transferred to the mRNA to create the cap structure. Its function is as follows. Y-domain: Indispensable for virus replication. Putative protease: The putative protease domain although necessary for replication of the virus may not be a protease but rather a structural Zn(2+)-binding domain. Inhibits induction of IFN-beta by MDA5 and RIG-I pathways and down-regulates the expression of MDA5. In terms of biological role, NTPase/helicase: Multi-functional protein that exhibits NTPase and RNA unwinding activities. Hydrolyzes all NTPs efficiently and unwinds RNA duplexes containing 5' overhangs. Possesses a sequence independent RNA-5'-triphosphatase (RTPase) activity suggestive of its role in forming viral cap structure. Also participates in viral genome replication, RNA translocation and genome packaging/unpackaging. Functionally, RNA-directed RNA polymerase: Plays an essential role in the virus replication. Binds to the 3'-end of the genomic RNA to initiate viral replication. The sequence is that of Non-structural polyprotein pORF1 from Hepatitis E virus genotype 1 (isolate Human/Pakistan/Sar-55) (HEV-1).